The sequence spans 336 residues: GTPase Obg (336 aa).

The region spanning 1–159 (MKFLDETKVY…KTIWLRLKLI (159 aa)) is the Obg domain. The OBG-type G domain maps to 160–327 (ADAGLVGLPN…TLRALRSVID (168 aa)). Residues 166–173 (GLPNAGKS), 191–195 (FTTLH), 212–215 (DIPG), 279–282 (SQID), and 308–310 (SAV) contribute to the GTP site. Mg(2+) contacts are provided by Ser173 and Thr193.

Belongs to the TRAFAC class OBG-HflX-like GTPase superfamily. OBG GTPase family. As to quaternary structure, monomer. Mg(2+) serves as cofactor.

The protein localises to the cytoplasm. Functionally, an essential GTPase which binds GTP, GDP and possibly (p)ppGpp with moderate affinity, with high nucleotide exchange rates and a fairly low GTP hydrolysis rate. Plays a role in control of the cell cycle, stress response, ribosome biogenesis and in those bacteria that undergo differentiation, in morphogenesis control. This chain is GTPase Obg, found in Sinorhizobium medicae (strain WSM419) (Ensifer medicae).